Reading from the N-terminus, the 189-residue chain is Peptidyl-tRNA hydrolase (189 aa).

Residue Y15 participates in tRNA binding. H20 serves as the catalytic Proton acceptor. Residues Y65, N67, and N113 each contribute to the tRNA site.

The protein belongs to the PTH family. In terms of assembly, monomer.

It localises to the cytoplasm. It carries out the reaction an N-acyl-L-alpha-aminoacyl-tRNA + H2O = an N-acyl-L-amino acid + a tRNA + H(+). Hydrolyzes ribosome-free peptidyl-tRNAs (with 1 or more amino acids incorporated), which drop off the ribosome during protein synthesis, or as a result of ribosome stalling. Functionally, catalyzes the release of premature peptidyl moieties from peptidyl-tRNA molecules trapped in stalled 50S ribosomal subunits, and thus maintains levels of free tRNAs and 50S ribosomes. The sequence is that of Peptidyl-tRNA hydrolase from Caldicellulosiruptor saccharolyticus (strain ATCC 43494 / DSM 8903 / Tp8T 6331).